Reading from the N-terminus, the 473-residue chain is Photosystem II CP43 reaction center protein (473 aa).

A propeptide spanning residues 1 to 14 (MKTLYSLRRFYPVE) is cleaved from the precursor. Threonine 15 is subject to N-acetylthreonine. The residue at position 15 (threonine 15) is a Phosphothreonine. Helical transmembrane passes span 69 to 93 (LFEV…PHLA), 134 to 155 (LLGP…KDRN), 178 to 200 (KALY…RKIT), 255 to 275 (KPFA…LSYS), and 291 to 312 (WFNN…ASQA). Glutamate 367 contacts [CaMn4O5] cluster. A helical membrane pass occupies residues 447-471 (RARAAAAGFEKGIDRDFEPVLSMTP).

Belongs to the PsbB/PsbC family. PsbC subfamily. As to quaternary structure, PSII is composed of 1 copy each of membrane proteins PsbA, PsbB, PsbC, PsbD, PsbE, PsbF, PsbH, PsbI, PsbJ, PsbK, PsbL, PsbM, PsbT, PsbX, PsbY, PsbZ, Psb30/Ycf12, at least 3 peripheral proteins of the oxygen-evolving complex and a large number of cofactors. It forms dimeric complexes. Binds multiple chlorophylls and provides some of the ligands for the Ca-4Mn-5O cluster of the oxygen-evolving complex. It may also provide a ligand for a Cl- that is required for oxygen evolution. PSII binds additional chlorophylls, carotenoids and specific lipids. serves as cofactor.

It is found in the plastid. The protein localises to the chloroplast thylakoid membrane. Its function is as follows. One of the components of the core complex of photosystem II (PSII). It binds chlorophyll and helps catalyze the primary light-induced photochemical processes of PSII. PSII is a light-driven water:plastoquinone oxidoreductase, using light energy to abstract electrons from H(2)O, generating O(2) and a proton gradient subsequently used for ATP formation. The protein is Photosystem II CP43 reaction center protein of Eucalyptus globulus subsp. globulus (Tasmanian blue gum).